We begin with the raw amino-acid sequence, 1304 residues long: MAIVKRGVRTKNKQSQQPSKSGIKKAEFDLHKKKEVGVSDLTLLSKIADDAINDNLYKRFMNSTIYTYIGHVLISVNPFEDLGIYTPEHLNKYKGKNRLEVPPHVFAIAESMYYNLKSYGDNQCVIISGESGAGKTEAAKQIMQYIANVSVDDQVSAGGDGGISKIKDMVLATNPLLESFGCAKTLRNNNSSRHGKYLEIYFNPSNYQPVSAHITNYLLEKQRVVSQITNERNFHIFYQFTKHCPPQYQQSFGIQGPETYVYTSAAKCINVDGVDDSKDLQDTLRAMQVIGLSQDEQDNIFRMLASILWVGNVSFVEDDNGNAAVRDESVTAFIAYLLDVDAETLKTSLIQRVMQTSHGMRRGSTYHVPLNIVQATSVRDALAKGIYNNLFDWIVERVNLSLQGSGAVQEKKSIGILDIYGFEIFEHNSFEQICINYVNEKLQQTFIQLTLKAEQDEYVQEQIKWTPIDYFNNKVVCDLIEALRPQPGLFAALNDSVKTAHADSDAADQVFAQRLSMVGANNAHFEDRRGKFIIKHYAGDVTYDVAGMTDKNKDSMLRDLVEVLSTSSNSFVSQVLFPPDLLAALTDSKKRPETASDKIKKSANLLVDTLSQCQPSYIRTIKPNQTKRPKEYDNNQVLHQIKYLGLKENVRIRRAGFAYRTTFDKFVQRFYLLSPKTGYAGDYIWQGDDVTAVHEILRSCHIPDSEYQMGTTKVFIKTPETLFALEDMRDKYWHNMAARIQRAWRRYIKRKDDAARLIQSAWKNKTHGNQFEQLRDYGNGLLHGRKERRRMSMLGSRAFMGDYLGCKYSSGFGRFIMSQAGISDSVIFSAKGDILLSKFGRSSKRLSRIFILTKNSLYVIAQTLVQNRLQVQKEFTIPVSGINYVGLSIYQDNWVAVSLHSPTPTTPDIFINLDFKTELVTHLKKCNPGLNIKIGQTIEYQKKPGKFHTIKFIVGNTAPVNGDSYKSGTVTVRQGLPGNSQNPKRPRGAAGKVDYSKYYNRGSNMRSTSSYQPPAVSKAPQSSRPSYIQPPVQQTQQRVVPPVQSQPKPQAQRYAPPDTQPQTQRHAPPDTQPHAHPEQAAQAAQAAFHHTAPQAQNTTQRKVPPSAPGSYGQQAPTQKPSAPSRPARKTAPAPPAKKNVAPPPPPAAASPPPKPKFPTYKAAYDFQGTGSASELPISKETIVFITRKEDNGWWLAKTLDETKEGWVPAAYVVECDPPANSPAGNAKSPPPPPPQLNSASQAQQSQQQAQAPNGAGLSNGLADALKAKKSEETNLAGSLADALKKRKGATGDSDEEDEEDDDDW.

The segment covering 1 to 12 (MAIVKRGVRTKN) has biased composition (basic residues). The interval 1–24 (MAIVKRGVRTKNKQSQQPSKSGIK) is disordered. The region spanning 36-730 (VGVSDLTLLS…TLFALEDMRD (695 aa)) is the Myosin motor domain. ATP is bound at residue 129 to 136 (GESGAGKT). The residue at position 364 (S364) is a Phosphoserine. The segment at 413-496 (SIGILDIYGF…PGLFAALNDS (84 aa)) is actin-binding. 2 IQ domains span residues 734-754 (HNMAARIQRAWRRYIKRKDDA) and 755-780 (ARLIQSAWKNKTHGNQFEQLRDYGNG). Positions 788-978 (RRRMSMLGSR…TVTVRQGLPG (191 aa)) constitute a TH1 domain. Disordered stretches follow at residues 963-1162 (DSYK…TYKA) and 1214-1304 (ECDP…DDDW). 2 stretches are compositionally biased toward polar residues: residues 964 to 983 (SYKSGTVTVRQGLPGNSQNP) and 1001 to 1012 (RGSNMRSTSSYQ). Composition is skewed to low complexity over residues 1029-1052 (QPPVQQTQQRVVPPVQSQPKPQAQ), 1072-1096 (QPHAHPEQAAQAAQAAFHHTAPQAQ), and 1120-1140 (PSAPSRPARKTAPAPPAKKNV). A compositionally biased stretch (pro residues) spans 1141–1156 (APPPPPAAASPPPKPK). Positions 1155–1217 (PKFPTYKAAY…PAAYVVECDP (63 aa)) constitute an SH3 domain. Composition is skewed to low complexity over residues 1217 to 1227 (PPANSPAGNAK) and 1236 to 1256 (LNSASQAQQSQQQAQAPNGAG). Residues 1292-1304 (DSDEEDEEDDDDW) show a composition bias toward acidic residues.

The protein belongs to the TRAFAC class myosin-kinesin ATPase superfamily. Myosin family. Phosphorylation of the TEDS site (Ser-364) is required for the polarization of the actin cytoskeleton. Phosphorylation probably activates the myosin-I ATPase activity.

It is found in the cytoplasm. It localises to the cytoskeleton. Its subcellular location is the actin patch. Type-I myosin implicated in the organization of the actin cytoskeleton. Required for proper actin cytoskeleton polarization. At the cell cortex, assembles in patch-like structures together with proteins from the actin-polymerizing machinery and promotes actin assembly. Functions as actin nucleation-promoting factor (NPF) for the Arp2/3 complex. The protein is Myosin-1 (MYO1) of Debaryomyces hansenii (strain ATCC 36239 / CBS 767 / BCRC 21394 / JCM 1990 / NBRC 0083 / IGC 2968) (Yeast).